The sequence spans 283 residues: Diphthine methyl ester synthase (283 aa).

Residues leucine 9, aspartate 84, glycine 87, 112 to 113, leucine 163, methionine 221, and histidine 246 contribute to the S-adenosyl-L-methionine site; that span reads SI.

Belongs to the diphthine synthase family.

The protein resides in the cytoplasm. The catalysed reaction is 2-[(3S)-amino-3-carboxypropyl]-L-histidyl-[translation elongation factor 2] + 4 S-adenosyl-L-methionine = diphthine methyl ester-[translation elongation factor 2] + 4 S-adenosyl-L-homocysteine + 3 H(+). The protein operates within protein modification; peptidyl-diphthamide biosynthesis. S-adenosyl-L-methionine-dependent methyltransferase that catalyzes four methylations of the modified target histidine residue in translation elongation factor 2 (EF-2), to form an intermediate called diphthine methyl ester. The four successive methylation reactions represent the second step of diphthamide biosynthesis. In Schizosaccharomyces pombe (strain 972 / ATCC 24843) (Fission yeast), this protein is Diphthine methyl ester synthase (dph5).